A 76-amino-acid polypeptide reads, in one-letter code: Exodeoxyribonuclease 7 small subunit (76 aa).

It belongs to the XseB family. Heterooligomer composed of large and small subunits.

It localises to the cytoplasm. It catalyses the reaction Exonucleolytic cleavage in either 5'- to 3'- or 3'- to 5'-direction to yield nucleoside 5'-phosphates.. Functionally, bidirectionally degrades single-stranded DNA into large acid-insoluble oligonucleotides, which are then degraded further into small acid-soluble oligonucleotides. The polypeptide is Exodeoxyribonuclease 7 small subunit (Geotalea daltonii (strain DSM 22248 / JCM 15807 / FRC-32) (Geobacter daltonii)).